A 338-amino-acid polypeptide reads, in one-letter code: D-erythrose-4-phosphate dehydrogenase (338 aa).

An NAD(+)-binding site is contributed by 12–13; sequence RI. Residues 154 to 156, Arg200, 213 to 214, and Arg236 contribute to the substrate site; these read SCT and TK. Cys155 serves as the catalytic Nucleophile. Residue Asn318 participates in NAD(+) binding.

The protein belongs to the glyceraldehyde-3-phosphate dehydrogenase family. Epd subfamily. Homotetramer.

The protein resides in the cytoplasm. It carries out the reaction D-erythrose 4-phosphate + NAD(+) + H2O = 4-phospho-D-erythronate + NADH + 2 H(+). Its pathway is cofactor biosynthesis; pyridoxine 5'-phosphate biosynthesis; pyridoxine 5'-phosphate from D-erythrose 4-phosphate: step 1/5. Catalyzes the NAD-dependent conversion of D-erythrose 4-phosphate to 4-phosphoerythronate. This Pectobacterium atrosepticum (strain SCRI 1043 / ATCC BAA-672) (Erwinia carotovora subsp. atroseptica) protein is D-erythrose-4-phosphate dehydrogenase.